Reading from the N-terminus, the 130-residue chain is Small ribosomal subunit protein uS9 (130 aa).

This sequence belongs to the universal ribosomal protein uS9 family.

The polypeptide is Small ribosomal subunit protein uS9 (Verminephrobacter eiseniae (strain EF01-2)).